The sequence spans 684 residues: Multisite-specific tRNA:(cytosine-C(5))-methyltransferase (684 aa).

Residues 1–12 (MARRKNFKKGNK) show a composition bias toward basic residues. Residues 1–24 (MARRKNFKKGNKKTFGARDDSRAQ) form a disordered region. Residues 173 to 179 (CAAPGSK), D202, D229, and D257 each bind S-adenosyl-L-methionine. The active-site Nucleophile is the C310. Position 426 is a phosphothreonine (T426). S431 is subject to Phosphoserine. A disordered region spans residues 650-684 (KATPSAEEKEKEKETTESPAETTTGTSTEAPSAAN). Positions 655 to 665 (AEEKEKEKETT) are enriched in basic and acidic residues. A compositionally biased stretch (low complexity) spans 666-684 (ESPAETTTGTSTEAPSAAN). S667 carries the post-translational modification Phosphoserine.

This sequence belongs to the class I-like SAM-binding methyltransferase superfamily. RsmB/NOP family. TRM4 subfamily.

The protein localises to the nucleus. It is found in the nucleolus. It catalyses the reaction cytidine(34) in tRNA precursor + S-adenosyl-L-methionine = 5-methylcytidine(34) in tRNA precursor + S-adenosyl-L-homocysteine + H(+). It carries out the reaction cytidine(40) in tRNA precursor + S-adenosyl-L-methionine = 5-methylcytidine(40) in tRNA precursor + S-adenosyl-L-homocysteine + H(+). The enzyme catalyses cytidine(48) in tRNA + S-adenosyl-L-methionine = 5-methylcytidine(48) in tRNA + S-adenosyl-L-homocysteine + H(+). The catalysed reaction is cytidine(49) in tRNA + S-adenosyl-L-methionine = 5-methylcytidine(49) in tRNA + S-adenosyl-L-homocysteine + H(+). Functionally, methylates cytosine to m5C at several positions in different tRNAs and pre-tRNAs containing intron. Able to modify tRNAs at all four positions (34, 40, 48 and 49) at which m5C has been found in tRNAs. May be involved in ribosome biogenesis as its disruption leads to increased sensitivity to the antibiotic paromomycin. This chain is Multisite-specific tRNA:(cytosine-C(5))-methyltransferase (NCL1), found in Saccharomyces cerevisiae (strain ATCC 204508 / S288c) (Baker's yeast).